The sequence spans 153 residues: SsrA-binding protein (153 aa).

The protein belongs to the SmpB family.

It localises to the cytoplasm. Required for rescue of stalled ribosomes mediated by trans-translation. Binds to transfer-messenger RNA (tmRNA), required for stable association of tmRNA with ribosomes. tmRNA and SmpB together mimic tRNA shape, replacing the anticodon stem-loop with SmpB. tmRNA is encoded by the ssrA gene; the 2 termini fold to resemble tRNA(Ala) and it encodes a 'tag peptide', a short internal open reading frame. During trans-translation Ala-aminoacylated tmRNA acts like a tRNA, entering the A-site of stalled ribosomes, displacing the stalled mRNA. The ribosome then switches to translate the ORF on the tmRNA; the nascent peptide is terminated with the 'tag peptide' encoded by the tmRNA and targeted for degradation. The ribosome is freed to recommence translation, which seems to be the essential function of trans-translation. This chain is SsrA-binding protein, found in Orientia tsutsugamushi (strain Ikeda) (Rickettsia tsutsugamushi).